A 644-amino-acid polypeptide reads, in one-letter code: 3D-(3,5/4)-trihydroxycyclohexane-1,2-dione hydrolase 2 (644 aa).

Glu-65 contributes to the thiamine diphosphate binding site. The interval 442–522 (SLPGDLQRMW…INVLLFDNSG (81 aa)) is thiamine pyrophosphate binding. Mg(2+) contacts are provided by Asp-493 and Asn-520.

Belongs to the TPP enzyme family. It depends on Mg(2+) as a cofactor. Thiamine diphosphate serves as cofactor.

It carries out the reaction 3D-3,5/4-trihydroxycyclohexane-1,2-dione + H2O = 5-deoxy-D-glucuronate + H(+). It functions in the pathway polyol metabolism; myo-inositol degradation into acetyl-CoA; acetyl-CoA from myo-inositol: step 3/7. Functionally, involved in the cleavage of the C1-C2 bond of 3D-(3,5/4)-trihydroxycyclohexane-1,2-dione (THcHDO) to yield 5-deoxy-glucuronate (5DG). The protein is 3D-(3,5/4)-trihydroxycyclohexane-1,2-dione hydrolase 2 of Bacillus cereus (strain ZK / E33L).